A 344-amino-acid polypeptide reads, in one-letter code: Holliday junction branch migration complex subunit RuvB (344 aa).

The interval 4-184 is large ATPase domain (RuvB-L); that stretch reads QDRIIDANAK…FGIVQRLEFY (181 aa). ATP contacts are provided by residues Arg24, Gly65, Lys68, Thr69, Thr70, 131–133, Arg174, Tyr184, and Arg221; that span reads EDF. A Mg(2+)-binding site is contributed by Thr69. The segment at 185 to 255 is small ATPAse domain (RuvB-S); it reads NIEDLTHIVE…IADLALNMLN (71 aa). Residues 258-344 form a head domain (RuvB-H) region; that stretch reads EHGFDHMDRR…ALKQDSLPGI (87 aa). DNA-binding residues include Arg294, Arg313, and Arg318.

This sequence belongs to the RuvB family. Homohexamer. Forms an RuvA(8)-RuvB(12)-Holliday junction (HJ) complex. HJ DNA is sandwiched between 2 RuvA tetramers; dsDNA enters through RuvA and exits via RuvB. An RuvB hexamer assembles on each DNA strand where it exits the tetramer. Each RuvB hexamer is contacted by two RuvA subunits (via domain III) on 2 adjacent RuvB subunits; this complex drives branch migration. In the full resolvosome a probable DNA-RuvA(4)-RuvB(12)-RuvC(2) complex forms which resolves the HJ.

It is found in the cytoplasm. The enzyme catalyses ATP + H2O = ADP + phosphate + H(+). In terms of biological role, the RuvA-RuvB-RuvC complex processes Holliday junction (HJ) DNA during genetic recombination and DNA repair, while the RuvA-RuvB complex plays an important role in the rescue of blocked DNA replication forks via replication fork reversal (RFR). RuvA specifically binds to HJ cruciform DNA, conferring on it an open structure. The RuvB hexamer acts as an ATP-dependent pump, pulling dsDNA into and through the RuvAB complex. RuvB forms 2 homohexamers on either side of HJ DNA bound by 1 or 2 RuvA tetramers; 4 subunits per hexamer contact DNA at a time. Coordinated motions by a converter formed by DNA-disengaged RuvB subunits stimulates ATP hydrolysis and nucleotide exchange. Immobilization of the converter enables RuvB to convert the ATP-contained energy into a lever motion, pulling 2 nucleotides of DNA out of the RuvA tetramer per ATP hydrolyzed, thus driving DNA branch migration. The RuvB motors rotate together with the DNA substrate, which together with the progressing nucleotide cycle form the mechanistic basis for DNA recombination by continuous HJ branch migration. Branch migration allows RuvC to scan DNA until it finds its consensus sequence, where it cleaves and resolves cruciform DNA. The protein is Holliday junction branch migration complex subunit RuvB of Saccharophagus degradans (strain 2-40 / ATCC 43961 / DSM 17024).